The sequence spans 346 residues: NADH-cytochrome b5 reductase 2 (346 aa).

Residues 28-50 traverse the membrane as a helical segment; the sequence is GGSNAALYAGLAAAAGAGAYYFL. The 106-residue stretch at 95 to 200 folds into the FAD-binding FR-type domain; the sequence is QGFISLKLDS…KGPIPKYPWS (106 aa). Position 203 to 238 (203 to 238) interacts with FAD; sequence KHDHIALIAGGTGITPMYQLARAIFNNPADKTKVTL.

It belongs to the flavoprotein pyridine nucleotide cytochrome reductase family. FAD is required as a cofactor.

The protein localises to the mitochondrion outer membrane. It carries out the reaction 2 Fe(III)-[cytochrome b5] + NADH = 2 Fe(II)-[cytochrome b5] + NAD(+) + H(+). May mediate the reduction of outer membrane cytochrome b5. The protein is NADH-cytochrome b5 reductase 2 (mcr1) of Botryotinia fuckeliana (strain B05.10) (Noble rot fungus).